The sequence spans 157 residues: 2-C-methyl-D-erythritol 2,4-cyclodiphosphate synthase (157 aa).

Residues Asp-9 and His-11 each contribute to the a divalent metal cation site. 4-CDP-2-C-methyl-D-erythritol 2-phosphate-binding positions include 9–11 and 35–36; these read DVH and HS. Position 43 (His-43) interacts with a divalent metal cation. 4-CDP-2-C-methyl-D-erythritol 2-phosphate is bound by residues 57 to 59, 62 to 66, 101 to 107, 133 to 136, Phe-140, and Arg-143; these read DIG, FPDTD, AEKPKMA, and TTTE.

The protein belongs to the IspF family. Homotrimer. The cofactor is a divalent metal cation.

It carries out the reaction 4-CDP-2-C-methyl-D-erythritol 2-phosphate = 2-C-methyl-D-erythritol 2,4-cyclic diphosphate + CMP. It functions in the pathway isoprenoid biosynthesis; isopentenyl diphosphate biosynthesis via DXP pathway; isopentenyl diphosphate from 1-deoxy-D-xylulose 5-phosphate: step 4/6. Involved in the biosynthesis of isopentenyl diphosphate (IPP) and dimethylallyl diphosphate (DMAPP), two major building blocks of isoprenoid compounds. Catalyzes the conversion of 4-diphosphocytidyl-2-C-methyl-D-erythritol 2-phosphate (CDP-ME2P) to 2-C-methyl-D-erythritol 2,4-cyclodiphosphate (ME-CPP) with a corresponding release of cytidine 5-monophosphate (CMP). The sequence is that of 2-C-methyl-D-erythritol 2,4-cyclodiphosphate synthase from Listeria monocytogenes serotype 4a (strain HCC23).